The sequence spans 460 residues: Nucleosome assembly protein 1-like 2 (460 aa).

Basic and acidic residues predominate over residues 1-11 (MAESVDHKELS). Disordered regions lie at residues 1 to 87 (MAES…DSDR) and 213 to 238 (DEEEEEEEDDSAGATGGEEVNEEDPK). The segment covering 213–223 (DEEEEEEEDDS) has biased composition (acidic residues). The Nuclear localization signal motif lies at 346–352 (IKKKQRH).

It belongs to the nucleosome assembly protein (NAP) family. Brain, specifically expressed in neurons.

Its subcellular location is the nucleus. Functionally, acidic protein which may be involved in interactions with other proteins or DNA. This chain is Nucleosome assembly protein 1-like 2 (Nap1l2), found in Mus musculus (Mouse).